We begin with the raw amino-acid sequence, 237 residues long: Dynein axonemal assembly factor 19 (237 aa).

Residues 8–33 (NFKALEKELQAALAADEKYKRENAAK) adopt a coiled-coil conformation.

The protein belongs to the DNAAF19/PR46b family. As to quaternary structure, homodimer.

The protein resides in the cytoplasm. The protein localises to the cell projection. Its subcellular location is the cilium. It localises to the flagellum. Dynein-attachment factor required for cilia motility. This chain is Dynein axonemal assembly factor 19 (Dnaaf19), found in Mus musculus (Mouse).